The primary structure comprises 1243 residues: Serine/threonine-protein kinase WNK4 (1243 aa).

A compositionally biased stretch (polar residues) spans 1-17 (MLASPATETTVLMSQTE). The segment at 1–142 (MLASPATETT…GPGSREPLRV (142 aa)) is disordered. The segment covering 65 to 77 (VDLGLLSSWSLPA) has biased composition (low complexity). A compositionally biased stretch (pro residues) spans 78-103 (SPAPDPPDPPDSAGPGPARSPPPSSK). S97 carries the post-translational modification Phosphoserine. Over residues 118–127 (AAEDSARPEL) the composition is skewed to basic and acidic residues. Residues K157 and K175 each participate in a glycyl lysine isopeptide (Lys-Gly) (interchain with G-Cter in ubiquitin) cross-link. A Protein kinase domain is found at 174–432 (LKFDIEIGRG…IQDLLAHAFF (259 aa)). S184 contributes to the ATP binding site. Glycyl lysine isopeptide (Lys-Gly) (interchain with G-Cter in ubiquitin) cross-links involve residues K186, K226, and K241. ATP-binding positions include 254 to 257 (TELM) and K304. Catalysis depends on D321, which acts as the Proton acceptor. Residue K328 forms a Glycyl lysine isopeptide (Lys-Gly) (interchain with G-Cter in ubiquitin) linkage. Residues S331 and S335 each carry the phosphoserine; by autocatalysis modification. Residues K387, K393, K450, and K454 each participate in a glycyl lysine isopeptide (Lys-Gly) (interchain with G-Cter in ubiquitin) cross-link. Positions 526-564 (KARELEALPPEPGPPPATVPMAPGPPSVFPPEPEEPEAD) are disordered. Over residues 534-556 (PPEPGPPPATVPMAPGPPSVFPP) the composition is skewed to pro residues. An interaction with KLHL3 region spans residues 557 to 567 (EPEEPEADQHQ). The residue at position 575 (S575) is a Phosphoserine. Residues 630-641 (SGPGSDFSPGDS) show a composition bias toward low complexity. Disordered stretches follow at residues 630 to 683 (SGPG…SVSD), 751 to 871 (DTGP…STPE), and 943 to 1110 (SPSP…SPVW). Residues 663 to 676 (PPGRNLRRRPRSRL) are compositionally biased toward basic residues. A compositionally biased stretch (pro residues) spans 767 to 780 (EPAPLPALPVPLPD). Low complexity predominate over residues 797 to 812 (WTAFSTSSSSPGTPLS). The segment covering 822–843 (PISPGPIFPITSPPCHPSPSPF) has biased composition (pro residues). Composition is skewed to low complexity over residues 844–854 (SPISSQVSSNP), 862–871 (PLPFSSSTPE), and 943–952 (SPSPGLLSQS). Positions 953–970 (PPAPPSPLPSLPLPPPVA) are enriched in pro residues. A Glycyl lysine isopeptide (Lys-Gly) (interchain with G-Cter in ubiquitin) cross-link involves residue K1010. The RFXV motif motif lies at 1016–1019 (RFQV). Residue S1035 is modified to Phosphoserine. The span at 1065-1077 (ETREALAESDRAA) shows a compositional bias: basic and acidic residues. Residues K1144, K1157, and K1158 each participate in a glycyl lysine isopeptide (Lys-Gly) (interchain with G-Cter in ubiquitin) cross-link. Residues 1166–1243 (RLGKQPPPGI…VTFAGDVGRM (78 aa)) are disordered. Polar residues-rich tracts occupy residues 1193–1204 (SFPTSRRNSLQR) and 1216–1228 (NSLSGSSTGSQEQ). At S1217 the chain carries Phosphoserine.

It belongs to the protein kinase superfamily. Ser/Thr protein kinase family. WNK subfamily. In terms of assembly, interacts with the C-terminal region of KCNJ1. The cofactor is Mg(2+). Autophosphorylated at Ser-331 and Ser-335, promoting its activation. Phosphorylated by WNK1 and WNK3. Phosphorylated at Ser-575 in a MAP3K15/ASK3-dependent process in response to osmotic stress or hypotonic low-chloride stimulation. In terms of processing, ubiquitinated by the BCR(KLHL3) complex, leading to its degradation. Also ubiquitinated by the BCR(KLHL2) complex. In terms of tissue distribution, expressed in kidney, colon and skin.

It is found in the cell junction. It localises to the tight junction. It carries out the reaction L-seryl-[protein] + ATP = O-phospho-L-seryl-[protein] + ADP + H(+). The enzyme catalyses L-threonyl-[protein] + ATP = O-phospho-L-threonyl-[protein] + ADP + H(+). With respect to regulation, activation requires autophosphorylation of Ser-331 and Ser-335. Autophosphorylation and subsequent activation is inhibited by increases in intracellular ionic strength: Cl(-) potently inhibits WNK4 kinase activity via direct binding. Also inhibited by K(+) ions. In terms of biological role, serine/threonine-protein kinase component of the WNK4-SPAK/OSR1 kinase cascade, which acts as a key regulator of ion transport in the distal nephron and blood pressure. The WNK4-SPAK/OSR1 kinase cascade is composed of WNK4, which mediates phosphorylation and activation of downstream kinases OXSR1/OSR1 and STK39/SPAK. Following activation, OXSR1/OSR1 and STK39/SPAK catalyze phosphorylation of ion cotransporters, such as SLC12A1/NKCC2, SLC12A2/NKCC1, SLC12A3/NCC, SLC12A5/KCC2 or SLC12A6/KCC3, regulating their activity. Acts as a molecular switch that regulates the balance between renal salt reabsorption and K(+) secretion by modulating the activities of renal transporters and channels, including the Na-Cl cotransporter SLC12A3/NCC and the K(+) channel, KCNJ1/ROMK. Regulates NaCl reabsorption in the distal nephron by activating the thiazide-sensitive Na-Cl cotransporter SLC12A3/NCC in distal convoluted tubule cells of kidney: activates SLC12A3/NCC in a OXSR1/OSR1- and STK39/SPAK-dependent process. Also acts as a scaffold protein independently of its protein kinase activity: negatively regulates cell membrane localization of various transporters and channels (CFTR, KCNJ1/ROMK, SLC4A4, SLC26A9 and TRPV4) by clathrin-dependent endocytosis. Also inhibits the activity of the epithelial Na(+) channel (ENaC) SCNN1A, SCNN1B, SCNN1D in a inase-independent mechanism. May also phosphorylate NEDD4L. This chain is Serine/threonine-protein kinase WNK4, found in Homo sapiens (Human).